Reading from the N-terminus, the 1726-residue chain is Merozoite surface protein 1 (1726 aa).

An N-terminal signal peptide occupies residues 1–19; the sequence is MKIIFFLCSFLFFIINTQC. Over residues 61–124 the composition is skewed to low complexity; sequence KGASAQSGTS…SGTSGTSPSS (64 aa). Residues 61 to 149 are disordered; sequence KGASAQSGTS…PPADASDSDA (89 aa). Positions 125–134 are enriched in polar residues; the sequence is RSNTLPRSNT. N133 is a glycosylation site (N-linked (GlcNAc...) asparagine). Residues 135–144 show a composition bias toward low complexity; sequence SSGASPPADA. N272, N501, N567, and N638 each carry an N-linked (GlcNAc...) asparagine glycan. The interval 735-771 is disordered; sequence SETTEDGGHSTHTLSQSGETEVTEETEETEETVGHTT. Residues 755–765 show a composition bias toward acidic residues; that stretch reads EVTEETEETEE. 7 N-linked (GlcNAc...) asparagine glycosylation sites follow: N827, N924, N944, N990, N1016, N1114, and N1221. Positions 914–952 are enriched in low complexity; that stretch reads TGTSSTSSPGNTTVNTAQSATHSNSQNQQSNASSTNTQN. A disordered region spans residues 914 to 961; sequence TGTSSTSSPGNTTVNTAQSATHSNSQNQQSNASSTNTQNGVAVSSGPA. 2 disordered regions span residues 1254 to 1284 and 1476 to 1497; these read VTPP…TQIP and KEKF…DEQK. The segment covering 1270 to 1284 has biased composition (polar residues); that stretch reads VSGSSGSTKEETQIP. Pro residues predominate over residues 1481–1490; sequence SSPPTTPPSP. N1613 carries an N-linked (GlcNAc...) asparagine glycan. EGF-like domains lie at 1617–1657 and 1658–1705; these read HQCV…VENP and NPTC…IFCS. Intrachain disulfides connect C1619–C1630, C1624–C1640, C1642–C1653, C1661–C1674, C1668–C1688, and C1690–C1704. S1705 carries the GPI-anchor amidated serine lipid modification. A propeptide spans 1706 to 1726 (removed in mature form); sequence SSNFLGISFLLILMLILYSFI.

As to quaternary structure, forms a complex composed of subunits p83, p30, p38, and p42 which remain non-covalently associated; the complex is formed at the merozoite surface prior to egress from host erythrocytes. Forms a complex composed of processed MSP1 subunits, MSP6 subunit p36 and MSP7; the complex is formed at the merozoite surface prior to egress from host erythrocytes. Within the complex, interacts (via subunit p38) with MSP6 subunit p36 and (via subunits p83, p30 and p38) with MSP7 (via subunit p22). Forms a complex composed of MSP1, MSP6, DBLMSP1 and DBLMSP2. Within the complex, interacts (via subunit p38) with DBLMSP1 and DBLMSP2. Forms a complex composed of MSP1, and rhoptry proteins RhopH3, RAP1 and CLAG9/RhopH3. Within the complex, interacts (via subunits p42 and p19) with RhopH3 (via C-terminus). Forms a complex composed of MSP1, MSP6, MSP7, MSP9 and MSP3; within the complex, MSP6 and MSP9 mediate the binding to the host erythrocyte. Interacts (via subunits p19 and p42) with MSP9; the interaction is direct; MSP1 subunits p19 or p42, and MSP9 form a co-ligand complex that interacts with host SLC4A1/Band 3 protein. May interact with PFD6. Interacts with host spectrin. In terms of assembly, interacts with host glycophorin GYPA in a sialic acid-independent manner. Interacts with host proinflammatory cytokine S100P; the interaction blocks S100P inflammatory and chemotactic activities. As to quaternary structure, interacts with host SLC4A1/Band 3 (via 5ABC region) on the host erythrocyte surface in a sialic acid-independent manner. In terms of processing, the p190 precursor is cleaved by SUB1 prior to merozoite egress into 4 subunits p83, p30, p38, and p42 which remain non-covalently associated. SUB1-mediated proteolytic cleavage occurs in an orderly manner; the first cleavage occurs at the p30/p38 site, followed by cleavage at the p83/p30 site, the last cleavage occurs at the p38/p42 site. The order of cleavage is essential for parasite viability. SUB1-mediated processing is essential for merozoite egress. In a second processing step during erythrocyte invasion, p42 is cleaved by SUB2 into p33 and p19; the latter remains attached to the merozoite surface via its GPI-anchor and is endocytosed during the subsequent ring stage.

It is found in the cell membrane. The protein localises to the secreted. It localises to the vacuole membrane. During the asexual blood stage, involved in merozoite egress from host erythrocytes possibly via its interaction with the host cytoskeleton protein spectrin resulting in the destabilization of the host cytoskeleton and thus leading to erythrocyte cell membrane rupture. Involved in the binding to host erythrocytes and is required for host erythrocyte invasion. In terms of biological role, by binding to host proinflammatory cytokine S100P may interfere with host immune responses. Functionally, involved in merozoite invasion of host erythrocytes. May play a role in the biogenesis and/or function of the food vacuole during the intraerythrocytic development. The polypeptide is Merozoite surface protein 1 (Plasmodium falciparum (isolate Palo Alto / Uganda)).